A 94-amino-acid chain; its full sequence is Protein S100-A1 (94 aa).

Glycine 2 bears the Blocked amino end (Gly) mark. 2 EF-hand domains span residues 13-48 and 50-85; these read INVF…FLDA and KDAD…LTVA. Ca(2+) is bound by residues lysine 28, glutamate 33, aspartate 63, asparagine 65, aspartate 67, glutamate 69, and glutamate 74. Residue cysteine 86 is modified to S-nitrosocysteine.

It belongs to the S-100 family. As to quaternary structure, dimer of either two alpha chains, or two beta chains, or one alpha and one beta chain. Also forms heterodimers with S100P. Interacts with AGER. Interacts with CAPZA1. Interacts with FKBP4. Interacts with RYR1 and RYR2. Interacts with CACYBP in a calcium-dependent manner. Interacts with PPP5C (via TPR repeats); the interaction is calcium-dependent and modulates PPP5C activity. Interacts with ATP2A2 and PLN in a Ca(2+)-dependent manner. Interacts with mitochondrial F1-ATPase subunits ATP5F1A and ATP5F1B; these interactions increase F1-ATPase activity. In terms of processing, glutathionylated; glutathionylation increases affinity to calcium about 10-fold. Although predominant among the water-soluble brain proteins, S100 is also found in a variety of other tissues.

The protein resides in the cytoplasm. The protein localises to the sarcoplasmic reticulum. It localises to the mitochondrion. Its function is as follows. Small calcium binding protein that plays important roles in several biological processes such as Ca(2+) homeostasis, chondrocyte biology and cardiomyocyte regulation. In response to an increase in intracellular Ca(2+) levels, binds calcium which triggers conformational changes. These changes allow interactions with specific target proteins and modulate their activity. Regulates a network in cardiomyocytes controlling sarcoplasmic reticulum Ca(2+) cycling and mitochondrial function through interaction with the ryanodine receptors RYR1 and RYR2, sarcoplasmic reticulum Ca(2+)-ATPase/ATP2A2 and mitochondrial F1-ATPase. Facilitates diastolic Ca(2+) dissociation and myofilament mechanics in order to improve relaxation during diastole. The sequence is that of Protein S100-A1 (S100A1) from Bos taurus (Bovine).